We begin with the raw amino-acid sequence, 97 residues long: Secreted Ly-6/uPAR domain-containing protein 2 (97 aa).

Residues M1–A22 form the signal peptide. 5 disulfide bridges follow: C25–C47, C28–C34, C40–C68, C72–C88, and C89–C94. The UPAR/Ly6 domain maps to C25 to N95.

In terms of assembly, interacts with CHRNA3, CHRNA4, CHRNA5, CHRNA7, CHRNB2 and CHRNB4. Interacts with CHRM1 and CHRM3 probably in an allosteric manner. In terms of tissue distribution, expressed at highest levels in cervix and esophagus, followed by adult and fetal skin. Expressed at lower levels in brain, lung, stomach, small intestine, colon, rectum, uterus, and thymus. Not detected in spleen nor bone marrow. Up-regulated 3-fold in psoriatic lesional skin. In the epidermis, predominantly produced by keratinocytes of the suprabasal epidermal compartment (at protein level). In attached gingiva, produced at highest levels by basal cells located in the lowermost epithelial layers (at protein level). Detected in serum (at protein level).

It localises to the secreted. Its function is as follows. Binds and may modulate the functional properties of nicotinic and muscarinic acetylcholine receptors. May regulate keratinocytes proliferation, differentiation and apoptosis. In vitro moderately inhibits ACh-evoked currents of alpha-3:beta-2-containing nAChRs and strongly these of alpha-4:beta-2-containing nAChRs, modulates alpha-7-containing nAChRs, and inhibits nicotine-induced signaling probably implicating alpha-3:beta-4-containing nAChRs. Proposed to act on alpha-3:beta-2 and alpha-7 nAChRs in an orthosteric, and on mAChRs, such as CHRM1 and CHRM3, in an allosteric manner. The protein is Secreted Ly-6/uPAR domain-containing protein 2 of Homo sapiens (Human).